Consider the following 176-residue polypeptide: Ribosome maturation factor RimM (176 aa).

Residues 93–166 (EGEYYHADLI…RVVIEMPGEI (74 aa)) enclose the PRC barrel domain.

This sequence belongs to the RimM family. As to quaternary structure, binds ribosomal protein uS19.

It localises to the cytoplasm. Its function is as follows. An accessory protein needed during the final step in the assembly of 30S ribosomal subunit, possibly for assembly of the head region. Essential for efficient processing of 16S rRNA. May be needed both before and after RbfA during the maturation of 16S rRNA. It has affinity for free ribosomal 30S subunits but not for 70S ribosomes. This Rhodopseudomonas palustris (strain BisA53) protein is Ribosome maturation factor RimM.